We begin with the raw amino-acid sequence, 511 residues long: Probable G-protein coupled receptor 101 (511 aa).

Topologically, residues 1–35 (MPPSCTNSTQENNGSRVCLPLSKMPISVAHGIIRS) are extracellular. N7 and N13 each carry an N-linked (GlcNAc...) asparagine glycan. The chain crosses the membrane as a helical span at residues 36–56 (VVLLVILGVAFLGNVVLGYVL). Over 57-67 (HRKPNLLQVTN) the chain is Cytoplasmic. Residues 68-90 (RFIFNLLVTDLLQVALVAPWVVS) traverse the membrane as a helical segment. Over 91-106 (TAIPFFWPLNIHFCTA) the chain is Extracellular. Residues C104 and C182 are joined by a disulfide bond. The chain crosses the membrane as a helical span at residues 107 to 127 (LVSLTHLFAFASVNTIVVVSV). Residues 128–149 (DRYLTIIHPLSYPSKMTNRRSY) lie on the Cytoplasmic side of the membrane. The helical transmembrane segment at 150–170 (ILLYGTWIAAFLQSTPPLYGW) threads the bilayer. At 171–196 (GHATFDDRNAFCSMIWGASPAYTVVS) the chain is on the extracellular side. A helical transmembrane segment spans residues 197–217 (VVSFLVIPLGVMIACYSVVFG). The Cytoplasmic segment spans residues 218 to 398 (AARRQQALLY…PPCYECKAAR (181 aa)). The segment covering 240–261 (DSVVHENEEGAKKRDEFQDKNE) has biased composition (basic and acidic residues). Disordered regions lie at residues 240-315 (DSVV…EVSN) and 367-386 (EAMR…TSDP). The span at 376–385 (PPSRRNSTSD) shows a compositional bias: polar residues. Residues 399–419 (VIFVIISTYVLSLGPYCFLAV) form a helical membrane-spanning segment. At 420–432 (LAVWVDIDTRVPQ) the chain is on the extracellular side. The chain crosses the membrane as a helical span at residues 433-453 (WVITIIIWLFFLQCCIHPYVY). The Cytoplasmic portion of the chain corresponds to 454–511 (GYMHKSIKKEIQEVLKKLICKKSPPVEDSHPDLHETEAGTEGGIEGKAVPSHDSATSP). The segment at 476-511 (SPPVEDSHPDLHETEAGTEGGIEGKAVPSHDSATSP) is disordered. A compositionally biased stretch (basic and acidic residues) spans 477-490 (PPVEDSHPDLHETE).

This sequence belongs to the G-protein coupled receptor 1 family. As to expression, expressed in the brain in hypothalamus.

It is found in the cell membrane. Functionally, orphan receptor. This chain is Probable G-protein coupled receptor 101 (Gpr101), found in Mus musculus (Mouse).